A 473-amino-acid polypeptide reads, in one-letter code: 3-isopropylmalate dehydratase large subunit (473 aa).

3 residues coordinate [4Fe-4S] cluster: Cys-353, Cys-414, and Cys-417.

The protein belongs to the aconitase/IPM isomerase family. LeuC type 1 subfamily. As to quaternary structure, heterodimer of LeuC and LeuD. The cofactor is [4Fe-4S] cluster.

It catalyses the reaction (2R,3S)-3-isopropylmalate = (2S)-2-isopropylmalate. It functions in the pathway amino-acid biosynthesis; L-leucine biosynthesis; L-leucine from 3-methyl-2-oxobutanoate: step 2/4. Functionally, catalyzes the isomerization between 2-isopropylmalate and 3-isopropylmalate, via the formation of 2-isopropylmaleate. This is 3-isopropylmalate dehydratase large subunit from Cellvibrio japonicus (strain Ueda107) (Pseudomonas fluorescens subsp. cellulosa).